Here is a 369-residue protein sequence, read N- to C-terminus: DNA replication and repair protein RecF (369 aa).

Residue 30–37 (GENAQGKT) coordinates ATP.

It belongs to the RecF family.

It localises to the cytoplasm. Functionally, the RecF protein is involved in DNA metabolism; it is required for DNA replication and normal SOS inducibility. RecF binds preferentially to single-stranded, linear DNA. It also seems to bind ATP. The chain is DNA replication and repair protein RecF from Oceanobacillus iheyensis (strain DSM 14371 / CIP 107618 / JCM 11309 / KCTC 3954 / HTE831).